Here is a 950-residue protein sequence, read N- to C-terminus: Protocadherin alpha-3 (950 aa).

A signal peptide spans 1-29 (MLFSWREDPGAQCLLLSLLLLAASEVGSG). Cadherin domains are found at residues 30 to 133 (QLHY…APVF), 134 to 242 (PMAV…APAF), 243 to 350 (ERTI…VPEL), 351 to 455 (VIQS…APAF), 456 to 565 (SQSE…APAL), and 581 to 678 (VPRS…APKA). Topologically, residues 30–697 (QLHYSVSEEA…GPEAALVDVN (668 aa)) are extracellular. N-linked (GlcNAc...) asparagine glycans are attached at residues N257 and N265. N-linked (GlcNAc...) asparagine glycosylation is present at N548. Residues 698–718 (VYLIVAICAVSSLLVLTLLLY) form a helical membrane-spanning segment. Topologically, residues 719-950 (TALRCSAPPT…GNSTTDNSDQ (232 aa)) are cytoplasmic. PXXP repeat units follow at residues 734-737 (PGKP) and 774-777 (PSLP). The interval 734–894 (PGKPTLVCSS…PDKFIIPGSP (161 aa)) is 6 X 4 AA repeats of P-X-X-P. Disordered stretches follow at residues 777 to 806 (PPCP…NPDW), 831 to 856 (GPGG…EVSP), and 869 to 950 (FKYG…NSDQ). Residues 782-797 (SRDREEKQDVDVDLSA) are compositionally biased toward basic and acidic residues. 4 PXXP repeats span residues 799–802 (PRQP), 832–835 (PGGP), 873–876 (PGNP), and 891–894 (PGSP). Residues 909-923 (DKSDFITFGKKEETK) are compositionally biased toward basic and acidic residues.

The protein localises to the cell membrane. Functionally, potential calcium-dependent cell-adhesion protein. May be involved in the establishment and maintenance of specific neuronal connections in the brain. This is Protocadherin alpha-3 (PCDHA3) from Homo sapiens (Human).